Here is a 442-residue protein sequence, read N- to C-terminus: Proline--tRNA ligase (442 aa).

This sequence belongs to the class-II aminoacyl-tRNA synthetase family. ProS type 2 subfamily. As to quaternary structure, homodimer.

The protein localises to the cytoplasm. The catalysed reaction is tRNA(Pro) + L-proline + ATP = L-prolyl-tRNA(Pro) + AMP + diphosphate. In terms of biological role, catalyzes the attachment of proline to tRNA(Pro) in a two-step reaction: proline is first activated by ATP to form Pro-AMP and then transferred to the acceptor end of tRNA(Pro). The chain is Proline--tRNA ligase from Brucella suis (strain ATCC 23445 / NCTC 10510).